A 1486-amino-acid polypeptide reads, in one-letter code: Chromosome partition protein MukB (1486 aa).

An ATP-binding site is contributed by 34-41 (GGNGAGKS). 3 coiled-coil regions span residues 326-418 (LEAD…QYNQ), 444-480 (LETF…QAYQ), and 509-603 (RHLA…RAPV). The flexible hinge stretch occupies residues 666 to 783 (PGGSEDQRLN…EVPLFGRAAR (118 aa)). Coiled coils occupy residues 835–923 (EAEI…AKLE), 977–1115 (EMLS…TAKA), and 1209–1266 (VEAI…QNVS).

Belongs to the SMC family. MukB subfamily. As to quaternary structure, homodimerization via its hinge domain. Binds to DNA via its C-terminal region. Interacts, and probably forms a ternary complex, with MukE and MukF via its C-terminal region. The complex formation is stimulated by calcium or magnesium. Interacts with tubulin-related protein FtsZ.

The protein resides in the cytoplasm. Its subcellular location is the nucleoid. Functionally, plays a central role in chromosome condensation, segregation and cell cycle progression. Functions as a homodimer, which is essential for chromosome partition. Involved in negative DNA supercoiling in vivo, and by this means organize and compact chromosomes. May achieve or facilitate chromosome segregation by condensation DNA from both sides of a centrally located replisome during cell division. The chain is Chromosome partition protein MukB from Escherichia coli (strain 55989 / EAEC).